The primary structure comprises 1649 residues: DNA-directed RNA polymerase subunit beta' (1649 aa).

Zn(2+)-binding residues include cysteine 62, cysteine 64, cysteine 77, and cysteine 80. Positions 746, 748, and 750 each coordinate Mg(2+). Residues cysteine 1077, cysteine 1268, cysteine 1275, and cysteine 1278 each coordinate Zn(2+).

This sequence belongs to the RNA polymerase beta' chain family. In terms of assembly, the RNAP catalytic core consists of 2 alpha, 1 beta, 1 beta' and 1 omega subunit. When a sigma factor is associated with the core the holoenzyme is formed, which can initiate transcription. Mg(2+) serves as cofactor. It depends on Zn(2+) as a cofactor.

It catalyses the reaction RNA(n) + a ribonucleoside 5'-triphosphate = RNA(n+1) + diphosphate. DNA-dependent RNA polymerase catalyzes the transcription of DNA into RNA using the four ribonucleoside triphosphates as substrates. This Thermosipho africanus (strain TCF52B) protein is DNA-directed RNA polymerase subunit beta'.